A 472-amino-acid chain; its full sequence is Protein c-ets-2-A (472 aa).

The PNT domain maps to 85–170 (NTFNGFAKKR…EHLEEMMKEH (86 aa)). A DNA-binding region (ETS) is located at residues 366–446 (IQLWQFLLEL…SGKRYVYRFV (81 aa)).

This sequence belongs to the ETS family.

It localises to the nucleus. In terms of biological role, probable transcription factor. The protein is Protein c-ets-2-A (ets2-a) of Xenopus laevis (African clawed frog).